A 130-amino-acid polypeptide reads, in one-letter code: Small ribosomal subunit protein uS9 (130 aa).

The disordered stretch occupies residues 111–130 (VERKKPGLKKARKASQFSKR). Residues 116 to 130 (PGLKKARKASQFSKR) are compositionally biased toward basic residues.

It belongs to the universal ribosomal protein uS9 family.

The polypeptide is Small ribosomal subunit protein uS9 (Lactococcus lactis subsp. lactis (strain IL1403) (Streptococcus lactis)).